Here is an 86-residue protein sequence, read N- to C-terminus: Sodium channel neurotoxin MeuNaTxalpha-4 (86 aa).

The signal sequence occupies residues 1–19 (MNYLILISFALLVITGVES). Residues 21–85 (RDAYIAKPHN…VPIRIPGKCH (65 aa)) enclose the LCN-type CS-alpha/beta domain. Cystine bridges form between cysteine 31-cysteine 84, cysteine 35-cysteine 57, cysteine 43-cysteine 67, and cysteine 47-cysteine 69. A propeptide (removed by a carboxypeptidase) is located at residue arginine 86.

The protein belongs to the long (4 C-C) scorpion toxin superfamily. Sodium channel inhibitor family. Alpha subfamily. As to expression, expressed by the venom gland.

It is found in the secreted. Its function is as follows. Alpha toxins bind voltage-independently at site-3 of sodium channels (Nav) and inhibit the inactivation of the activated channels, thereby blocking neuronal transmission. This toxin inhibits inactivation of drosophila DmNav1 (EC(50)=130 nM). The protein is Sodium channel neurotoxin MeuNaTxalpha-4 of Mesobuthus eupeus (Lesser Asian scorpion).